Consider the following 541-residue polypeptide: ATP synthase subunit beta (541 aa).

The segment at 1–65 is disordered; sequence MAKAVTSSKG…TPVKKEERAK (65 aa). Composition is skewed to basic and acidic residues over residues 25–36 and 52–65; these read VKKDASKSKDAS and AAKD…ERAK. 214–221 contacts ATP; that stretch reads GGAGVGKT.

It belongs to the ATPase alpha/beta chains family. As to quaternary structure, F-type ATPases have 2 components, CF(1) - the catalytic core - and CF(0) - the membrane proton channel. CF(1) has five subunits: alpha(3), beta(3), gamma(1), delta(1), epsilon(1). CF(0) has three main subunits: a(1), b(2) and c(9-12). The alpha and beta chains form an alternating ring which encloses part of the gamma chain. CF(1) is attached to CF(0) by a central stalk formed by the gamma and epsilon chains, while a peripheral stalk is formed by the delta and b chains.

The protein resides in the cell inner membrane. It carries out the reaction ATP + H2O + 4 H(+)(in) = ADP + phosphate + 5 H(+)(out). Produces ATP from ADP in the presence of a proton gradient across the membrane. The catalytic sites are hosted primarily by the beta subunits. The chain is ATP synthase subunit beta from Bartonella tribocorum (strain CIP 105476 / IBS 506).